Here is a 401-residue protein sequence, read N- to C-terminus: Argininosuccinate synthase (401 aa).

8-16 (AYSGGLDTS) contacts ATP. Y85 lines the L-citrulline pocket. G115 contributes to the ATP binding site. Residues T117, N121, and D122 each coordinate L-aspartate. N121 serves as a coordination point for L-citrulline. Positions 125, 173, 258, and 270 each coordinate L-citrulline.

It belongs to the argininosuccinate synthase family. Type 1 subfamily. As to quaternary structure, homotetramer.

It localises to the cytoplasm. It carries out the reaction L-citrulline + L-aspartate + ATP = 2-(N(omega)-L-arginino)succinate + AMP + diphosphate + H(+). It functions in the pathway amino-acid biosynthesis; L-arginine biosynthesis; L-arginine from L-ornithine and carbamoyl phosphate: step 2/3. This is Argininosuccinate synthase from Staphylococcus aureus (strain bovine RF122 / ET3-1).